Reading from the N-terminus, the 352-residue chain is Ketoisovalerate oxidoreductase subunit VorB (352 aa).

As to quaternary structure, heterotrimer of the VorA, VorB and VorC subunits.

It catalyses the reaction 3-methyl-2-oxobutanoate + 2 oxidized [2Fe-2S]-[ferredoxin] + CoA = 2-methylpropanoyl-CoA + 2 reduced [2Fe-2S]-[ferredoxin] + CO2 + H(+). The sequence is that of Ketoisovalerate oxidoreductase subunit VorB (vorB) from Methanothermobacter thermautotrophicus (strain ATCC 29096 / DSM 1053 / JCM 10044 / NBRC 100330 / Delta H) (Methanobacterium thermoautotrophicum).